Consider the following 362-residue polypeptide: Dihydroorotate dehydrogenase (quinone) (362 aa).

Residues 62–66 and T86 contribute to the FMN site; that span reads AGYDK. Residue K66 participates in substrate binding. Substrate is bound at residue 111-115; sequence NRLGF. Positions 139 and 170 each coordinate FMN. N170 is a binding site for substrate. S173 (nucleophile) is an active-site residue. N175 lines the substrate pocket. FMN contacts are provided by K215 and S243. 244–245 contacts substrate; sequence NT. FMN is bound by residues G266, G295, and 316–317; that span reads YS.

This sequence belongs to the dihydroorotate dehydrogenase family. Type 2 subfamily. In terms of assembly, monomer. It depends on FMN as a cofactor.

It is found in the cell membrane. The catalysed reaction is (S)-dihydroorotate + a quinone = orotate + a quinol. It participates in pyrimidine metabolism; UMP biosynthesis via de novo pathway; orotate from (S)-dihydroorotate (quinone route): step 1/1. Functionally, catalyzes the conversion of dihydroorotate to orotate with quinone as electron acceptor. In Rhizobium etli (strain ATCC 51251 / DSM 11541 / JCM 21823 / NBRC 15573 / CFN 42), this protein is Dihydroorotate dehydrogenase (quinone).